We begin with the raw amino-acid sequence, 450 residues long: Bifunctional protein GlmU (450 aa).

The tract at residues 1–226 (MLAVAVLAAG…ADEVNGINNR (226 aa)) is pyrophosphorylase. UDP-N-acetyl-alpha-D-glucosamine is bound by residues 7-10 (LAAG), K21, Q73, and 78-79 (GT). Residue D103 participates in Mg(2+) binding. Residues G140, E155, N170, and N224 each contribute to the UDP-N-acetyl-alpha-D-glucosamine site. N224 contacts Mg(2+). The linker stretch occupies residues 227–247 (RQLAQCEALLQQRLRHHWMDE). The interval 248-450 (GVTFIDPESC…TKEGWAERKV (203 aa)) is N-acetyltransferase. 2 residues coordinate UDP-N-acetyl-alpha-D-glucosamine: R329 and K347. Catalysis depends on H359, which acts as the Proton acceptor. 2 residues coordinate UDP-N-acetyl-alpha-D-glucosamine: Y362 and N373. Residues A376, 382-383 (NY), A419, and R436 each bind acetyl-CoA.

It in the N-terminal section; belongs to the N-acetylglucosamine-1-phosphate uridyltransferase family. The protein in the C-terminal section; belongs to the transferase hexapeptide repeat family. Homotrimer. Mg(2+) serves as cofactor.

It localises to the cytoplasm. The catalysed reaction is alpha-D-glucosamine 1-phosphate + acetyl-CoA = N-acetyl-alpha-D-glucosamine 1-phosphate + CoA + H(+). The enzyme catalyses N-acetyl-alpha-D-glucosamine 1-phosphate + UTP + H(+) = UDP-N-acetyl-alpha-D-glucosamine + diphosphate. It participates in nucleotide-sugar biosynthesis; UDP-N-acetyl-alpha-D-glucosamine biosynthesis; N-acetyl-alpha-D-glucosamine 1-phosphate from alpha-D-glucosamine 6-phosphate (route II): step 2/2. The protein operates within nucleotide-sugar biosynthesis; UDP-N-acetyl-alpha-D-glucosamine biosynthesis; UDP-N-acetyl-alpha-D-glucosamine from N-acetyl-alpha-D-glucosamine 1-phosphate: step 1/1. It functions in the pathway bacterial outer membrane biogenesis; LPS lipid A biosynthesis. Its function is as follows. Catalyzes the last two sequential reactions in the de novo biosynthetic pathway for UDP-N-acetylglucosamine (UDP-GlcNAc). The C-terminal domain catalyzes the transfer of acetyl group from acetyl coenzyme A to glucosamine-1-phosphate (GlcN-1-P) to produce N-acetylglucosamine-1-phosphate (GlcNAc-1-P), which is converted into UDP-GlcNAc by the transfer of uridine 5-monophosphate (from uridine 5-triphosphate), a reaction catalyzed by the N-terminal domain. In Synechococcus sp. (strain CC9605), this protein is Bifunctional protein GlmU.